Consider the following 98-residue polypeptide: Large ribosomal subunit protein eL21 (98 aa).

A disordered region spans residues 1–24 (MVKMSHGPRSGSRRKLTKSAEERK).

It belongs to the eukaryotic ribosomal protein eL21 family.

This chain is Large ribosomal subunit protein eL21 (rpl21e), found in Thermoplasma acidophilum (strain ATCC 25905 / DSM 1728 / JCM 9062 / NBRC 15155 / AMRC-C165).